The chain runs to 353 residues: MTIAIGSTYQEKRTWFDDADDWLRQDRFVFVGWSGLLLFPCAYFALGGWFTGTTFVTSWYTHGLATSYLEGCNFLTAAVSTPANSMAHSLLFLWGPEAQGDFTRWCQLGGLWTFVALHGSFGLIGFMLRQFEIARSVNLRPYNAIAFSAPIAVFVSVFLIYPLGQSGWFFAPSFGVAAIFRFILFFQGFHNWTLNPFHMMGVAGVLGAALLCAIHGATVENTLFEDGDGANTFRAFNPTQAEETYSMVTANRFWSQIFGVAFSNKRWLHFFMLLVPVTGLWMSAIGVVGLALNLRAYDFVSQEIRAAEDPEFETFYTKNILLNEGIRAWMAAQDQPHERLVFPEEVLPRGNAL.

Thr-2 is subject to N-acetylthreonine. Position 2 is a phosphothreonine (Thr-2). The chain crosses the membrane as a helical span at residues 41–61 (CAYFALGGWFTGTTFVTSWYT). His-118 contacts chlorophyll a. A helical membrane pass occupies residues 125–141 (GFMLRQFEIARSVNLRP). Pheophytin a contacts are provided by Gln-130 and Asn-143. The chain crosses the membrane as a helical span at residues 153-166 (VFVSVFLIYPLGQS). His-198 is a binding site for chlorophyll a. Residues 208–228 (AALLCAIHGATVENTLFEDGD) form a helical membrane-spanning segment. A plastoquinone contacts are provided by His-215 and Phe-262. Residue His-215 coordinates Fe cation. His-269 contacts Fe cation. The chain crosses the membrane as a helical span at residues 279–295 (GLWMSAIGVVGLALNLR).

The protein belongs to the reaction center PufL/M/PsbA/D family. PSII is composed of 1 copy each of membrane proteins PsbA, PsbB, PsbC, PsbD, PsbE, PsbF, PsbH, PsbI, PsbJ, PsbK, PsbL, PsbM, PsbT, PsbX, PsbY, PsbZ, Psb30/Ycf12, at least 3 peripheral proteins of the oxygen-evolving complex and a large number of cofactors. It forms dimeric complexes. The D1/D2 heterodimer binds P680, chlorophylls that are the primary electron donor of PSII, and subsequent electron acceptors. It shares a non-heme iron and each subunit binds pheophytin, quinone, additional chlorophylls, carotenoids and lipids. There is also a Cl(-1) ion associated with D1 and D2, which is required for oxygen evolution. The PSII complex binds additional chlorophylls, carotenoids and specific lipids. serves as cofactor.

The protein localises to the plastid. Its subcellular location is the chloroplast thylakoid membrane. The enzyme catalyses 2 a plastoquinone + 4 hnu + 2 H2O = 2 a plastoquinol + O2. Functionally, photosystem II (PSII) is a light-driven water:plastoquinone oxidoreductase that uses light energy to abstract electrons from H(2)O, generating O(2) and a proton gradient subsequently used for ATP formation. It consists of a core antenna complex that captures photons, and an electron transfer chain that converts photonic excitation into a charge separation. The D1/D2 (PsbA/PsbD) reaction center heterodimer binds P680, the primary electron donor of PSII as well as several subsequent electron acceptors. D2 is needed for assembly of a stable PSII complex. This Tetradesmus obliquus (Green alga) protein is Photosystem II D2 protein.